The primary structure comprises 510 residues: Inositol-3-phosphate synthase isozyme 2 (510 aa).

It belongs to the myo-inositol 1-phosphate synthase family. NAD(+) is required as a cofactor. As to expression, expressed in siliques, leaves, roots, seed endosperm, but not in embryos. Highest expression in seeds. In leaves, only expressed in hydathodes and vascular tissue.

The protein localises to the cytoplasm. It catalyses the reaction D-glucose 6-phosphate = 1D-myo-inositol 3-phosphate. Its pathway is polyol metabolism; myo-inositol biosynthesis; myo-inositol from D-glucose 6-phosphate: step 1/2. Key enzyme in myo-inositol biosynthesis pathway that catalyzes the conversion of glucose 6-phosphate to 1-myo-inositol 1-phosphate in a NAD-dependent manner. The polypeptide is Inositol-3-phosphate synthase isozyme 2 (IPS2) (Arabidopsis thaliana (Mouse-ear cress)).